The following is a 247-amino-acid chain: Lysosomal membrane ascorbate-dependent ferrireductase CYB561A3 (247 aa).

Over 1–3 (MRG) the chain is Cytoplasmic. The chain crosses the membrane as a helical span at residues 4–24 (IVGFYITYLLCLILGIACVVL). Residues 13 to 223 (LCLILGIACV…FGLVVLKILS (211 aa)) form the Cytochrome b561 domain. The Lumenal portion of the chain corresponds to 25–46 (VVHWNFMYRDGFAWDGSSKNFN). A helical membrane pass occupies residues 47-67 (WHPVLMVTGMLVLYGNAAVVY). Heme b-binding residues include His48 and Arg68. Over 68 to 82 (RIPLTWGHNKLPWKL) the chain is Cytoplasmic. Residues Lys77 and Lys81 each contribute to the L-ascorbate site. Residues 83–103 (LHAGLLLLSFIFSVIGLCAVF) traverse the membrane as a helical segment. Heme b-binding positions include His84, 113–116 (NLYS), and His118. Topologically, residues 104 to 120 (NFHNVHHTANLYSLHSW) are lumenal. Residues 121-141 (VGICTAALFTAQWVMGFTSFL) form a helical membrane-spanning segment. Residues 142–155 (LPCTPMAVRAFVKP) are Cytoplasmic-facing. An L-ascorbate-binding site is contributed by Arg150. The helical transmembrane segment at 156–176 (THVWMGAMILVLSIVSCISGI) threads the bilayer. Heme b contacts are provided by His157 and Glu178. Over 177–201 (NEKLFFVLKETTNGTKPYSALPPEA) the chain is Lumenal. N-linked (GlcNAc...) asparagine glycosylation occurs at Asn189. A helical transmembrane segment spans residues 202 to 222 (VAANSLGVIIVAFGLVVLKIL). Over 223-247 (SNQMWQRPEPGDDEGVYRPLAYDGS) the chain is Cytoplasmic. Gln228 serves as a coordination point for heme b.

Homodimer. Heme b is required as a cofactor.

It is found in the late endosome membrane. Its subcellular location is the lysosome membrane. The catalysed reaction is Fe(3+)(out) + L-ascorbate(in) = monodehydro-L-ascorbate radical(in) + Fe(2+)(out) + H(+). In terms of biological role, transmembrane reductase that uses ascorbate as an electron donor in the cytoplasm and transfers electrons across membranes to reduce iron cations Fe(3+) into Fe(2+) in the lumen of the late endosome and lysosome. Reduced iron can then be extruded from the late endosome and lysosome to the cytoplasm by divalent metal-specific transporters. It is therefore most probably involved in endosomal and lysosomal cellular iron homeostasis. The chain is Lysosomal membrane ascorbate-dependent ferrireductase CYB561A3 (cyb561a3a) from Danio rerio (Zebrafish).